Here is a 526-residue protein sequence, read N- to C-terminus: UDP-glycosyltransferase UGT5 (526 aa).

Topologically, residues 1–474 are lumenal; it reads MIFFYFLTLT…TAAVDMPWYQ (474 aa). N-linked (GlcNAc...) asparagine glycans are attached at residues Asn-49, Asn-124, and Asn-283. A helical transmembrane segment spans residues 475–495; that stretch reads YLLLDVIAFLIFILVSVILII. Residues 496–526 lie on the Cytoplasmic side of the membrane; it reads YYGVKISLRYLCALIFGNSSSLKPTKKVKDN.

It belongs to the UDP-glycosyltransferase family.

Its subcellular location is the microsome membrane. Functionally, catalyzes the transfer of a glycosyl group from a UDP-sugar to an acceptor molecule. This Dactylopius coccus (Cochineal) protein is UDP-glycosyltransferase UGT5.